Consider the following 1123-residue polypeptide: Leucine--tRNA ligase, cytoplasmic (1123 aa).

The 'HIGH' region signature appears at 84-94 (PYMNGRLHAGH). The 'KMSKS' region signature appears at 757-761 (KMSKS). Lysine 760 serves as a coordination point for ATP.

Belongs to the class-I aminoacyl-tRNA synthetase family.

It localises to the cytoplasm. The enzyme catalyses tRNA(Leu) + L-leucine + ATP = L-leucyl-tRNA(Leu) + AMP + diphosphate. This chain is Leucine--tRNA ligase, cytoplasmic (leu-6), found in Neurospora crassa (strain ATCC 24698 / 74-OR23-1A / CBS 708.71 / DSM 1257 / FGSC 987).